Here is a 95-residue protein sequence, read N- to C-terminus: MSVTKETVQHVANLARLQFNEEETERFSGQISRIVDLMDALSKLPTEGVKPMSHAVDMAIPQRDDVVTNGNQRDTMLANAPDAEKGHFRVPKVIE.

The protein belongs to the GatC family. As to quaternary structure, heterotrimer of A, B and C subunits.

It carries out the reaction L-glutamyl-tRNA(Gln) + L-glutamine + ATP + H2O = L-glutaminyl-tRNA(Gln) + L-glutamate + ADP + phosphate + H(+). The catalysed reaction is L-aspartyl-tRNA(Asn) + L-glutamine + ATP + H2O = L-asparaginyl-tRNA(Asn) + L-glutamate + ADP + phosphate + 2 H(+). Its function is as follows. Allows the formation of correctly charged Asn-tRNA(Asn) or Gln-tRNA(Gln) through the transamidation of misacylated Asp-tRNA(Asn) or Glu-tRNA(Gln) in organisms which lack either or both of asparaginyl-tRNA or glutaminyl-tRNA synthetases. The reaction takes place in the presence of glutamine and ATP through an activated phospho-Asp-tRNA(Asn) or phospho-Glu-tRNA(Gln). The chain is Aspartyl/glutamyl-tRNA(Asn/Gln) amidotransferase subunit C from Magnetococcus marinus (strain ATCC BAA-1437 / JCM 17883 / MC-1).